The chain runs to 339 residues: Anthranilate phosphoribosyltransferase (339 aa).

5-phospho-alpha-D-ribose 1-diphosphate is bound by residues G81, 84 to 85 (GD), S89, 91 to 94 (NVSS), 109 to 117 (KHGNRALSS), and A121. G81 lines the anthranilate pocket. S93 is a binding site for Mg(2+). Position 112 (N112) interacts with anthranilate. Position 167 (R167) interacts with anthranilate. Positions 225 and 226 each coordinate Mg(2+).

Belongs to the anthranilate phosphoribosyltransferase family. In terms of assembly, homodimer. Requires Mg(2+) as cofactor.

The catalysed reaction is N-(5-phospho-beta-D-ribosyl)anthranilate + diphosphate = 5-phospho-alpha-D-ribose 1-diphosphate + anthranilate. The protein operates within amino-acid biosynthesis; L-tryptophan biosynthesis; L-tryptophan from chorismate: step 2/5. Functionally, catalyzes the transfer of the phosphoribosyl group of 5-phosphorylribose-1-pyrophosphate (PRPP) to anthranilate to yield N-(5'-phosphoribosyl)-anthranilate (PRA). This is Anthranilate phosphoribosyltransferase from Brucella abortus (strain S19).